Consider the following 316-residue polypeptide: Transaldolase (316 aa).

Lysine 125 functions as the Schiff-base intermediate with substrate in the catalytic mechanism.

The protein belongs to the transaldolase family. Type 1 subfamily. Homodimer.

The protein resides in the cytoplasm. The enzyme catalyses D-sedoheptulose 7-phosphate + D-glyceraldehyde 3-phosphate = D-erythrose 4-phosphate + beta-D-fructose 6-phosphate. The protein operates within carbohydrate degradation; pentose phosphate pathway; D-glyceraldehyde 3-phosphate and beta-D-fructose 6-phosphate from D-ribose 5-phosphate and D-xylulose 5-phosphate (non-oxidative stage): step 2/3. Its function is as follows. Transaldolase is important for the balance of metabolites in the pentose-phosphate pathway. The sequence is that of Transaldolase from Acidovorax sp. (strain JS42).